The sequence spans 310 residues: Protease HtpX homolog (310 aa).

Helical transmembrane passes span 7-27 and 29-49; these read SVML…LIGG and AGMT…YWYS. H131 contacts Zn(2+). Residue E132 is part of the active site. H135 serves as a coordination point for Zn(2+). 2 helical membrane passes run 141-161 and 178-198; these read ILIG…ASMA and PLGF…AALI. E207 contributes to the Zn(2+) binding site. The disordered stretch occupies residues 277-310; the sequence is LTGARPQSGGAPSGPERTARNAEDSAKDFWDSLK. The segment covering 293-310 has biased composition (basic and acidic residues); it reads RTARNAEDSAKDFWDSLK.

The protein belongs to the peptidase M48B family. The cofactor is Zn(2+).

It localises to the cell inner membrane. This is Protease HtpX homolog from Desulfatibacillum aliphaticivorans.